The following is a 266-amino-acid chain: Zinc transporter ZupT (266 aa).

The next 8 helical transmembrane spans lie at 8–28 (LLLTLLAGLSTGIGSAMALVV), 35–55 (FLTLALGFSAGVMLYVSFVEL), 70–90 (QAAAWVATLAFFGGIFFIWAI), 123–143 (GLFTAAAIAIHNFPEGMAVFF), 152–172 (GIVIATTIALHNIPEGMAIAV), 185–205 (FTYSFLSGLAEPLGAIVGFAI), 209–229 (WLSPPVFGSVLAAVAGIMVYI), and 246–266 (LAISGLIAGMAVMALSLLLLA). N134 and E137 together coordinate Fe(2+). Positions 137 and 162 each coordinate Zn(2+). Fe(2+) is bound by residues N163, E166, and E195. E166 lines the Zn(2+) pocket.

The protein belongs to the ZIP transporter (TC 2.A.5) family. ZupT subfamily.

Its subcellular location is the cell membrane. The enzyme catalyses Zn(2+)(in) = Zn(2+)(out). Functionally, mediates zinc uptake. May also transport other divalent cations. The protein is Zinc transporter ZupT of Chlorobium phaeovibrioides (strain DSM 265 / 1930) (Prosthecochloris vibrioformis (strain DSM 265)).